Here is a 203-residue protein sequence, read N- to C-terminus: E3 ubiquitin-protein ligase RNF152 (203 aa).

An RING-type zinc finger spans residues 12–55; that stretch reads CQICFNYYSPRRRPKLLDCKHTCCSVCLQQMRTSQKDVRCPWCR. The necessary for interaction with RRAGA stretch occupies residues 106–165; that stretch reads ISKERTLLPGDMGCRLLPGSQQKSLTVVTIPAEQQPLQGGAPPEAVEEEPDRRGVVKSST. Positions 139–158 are disordered; the sequence is QQPLQGGAPPEAVEEEPDRR. A helical transmembrane segment spans residues 167-187; that stretch reads SGVCTVILVACVLVFLLGIVL.

Belongs to the RNF152 family. In terms of assembly, interacts with RRAGA (inactive GDP-bound form); stimulated by amino acid starvation. Interacts with SEC16A. In terms of processing, ubiquitinated. Autoubiquitinated in vitro, leading to its degradation by the proteasome.

It is found in the lysosome membrane. It carries out the reaction S-ubiquitinyl-[E2 ubiquitin-conjugating enzyme]-L-cysteine + [acceptor protein]-L-lysine = [E2 ubiquitin-conjugating enzyme]-L-cysteine + N(6)-ubiquitinyl-[acceptor protein]-L-lysine.. It functions in the pathway protein modification; protein ubiquitination. Its function is as follows. E3 ubiquitin-protein ligase that acts as a negative regulator of mTORC1 signaling by mediating ubiquitination of RagA/RRAGA and RHEB. Catalyzes 'Lys-63'-linked polyubiquitination of RagA/RRAGA in response to amino acid starvation, thereby regulating mTORC1 signaling. Also mediates monoubiquitination of RHEB, promoting its association with the TSC-TBC complex and subsequent inhibition. Also mediates 'Lys-48'-linked polyubiquitination of target proteins and their subsequent targeting to the proteasome for degradation. Induces apoptosis when overexpressed. This Mus musculus (Mouse) protein is E3 ubiquitin-protein ligase RNF152.